Reading from the N-terminus, the 118-residue chain is MATYGMANERLRALEEIEREIAAILLNAGNVILELSKEKPNERVLDKQATQFTASVQRVESELSGQIRYLTQVATGQPHEGSSYSARKDGTMALNRIDYARVKLAELSRTCDQMLEQP.

It belongs to the Mediator complex subunit 11 family. As to quaternary structure, component of the Mediator complex.

Its subcellular location is the nucleus. In terms of biological role, component of the Mediator complex, a coactivator involved in the regulated transcription of nearly all RNA polymerase II-dependent genes. Mediator functions as a bridge to convey information from gene-specific regulatory proteins to the basal RNA polymerase II transcription machinery. Mediator is recruited to promoters by direct interactions with regulatory proteins and serves as a scaffold for the assembly of a functional pre-initiation complex with RNA polymerase II and the general transcription factors. The chain is Mediator of RNA polymerase II transcription subunit 11 (med11) from Xenopus tropicalis (Western clawed frog).